Reading from the N-terminus, the 589-residue chain is MLLSVRGVPVEIPSLKDTKKSKGIIRSGWVMLKEDKMKYLPWTKKWLVLSSNSLSIYKGSKSESAQVTLLLKDIQKVERSKSRTFCFKLRFKSSTKNFEIQACELSVADNMECYEWMDLISSRALASKVSSPMNPKHQVHVGIDNEGNYVGLPKEWILLLQSSSITKQECMEEPKAVIQALDFYSKQLDTTSETKDSFSFCKETLPRSSTTSYSIRDADKHHKLTTSGVTKMNITERCKPKTTIQTDKKHIIRPFIEDKSHVESIMTGKVTKVPVKADSKNTLSRRMTDRQALAMLKDSVTSHDPVEYFNVKHKLGQGASGSVYLAKVVGGKQLGIFDSVAIKSIDLQCQTRKELILNEITVMRESIHPNIVTYLDSFLVRERHLWVVMEYMNAGSLTDIIEKSKLTEAQIARICLETCKGIQHLHARNIIHRDIKSDNVLLDNSGNIKITDFGFCARLSNRTNKRVTMVGTPYWMAPEVVKQNEYGTKVDIWSLGIMIIEMIENEPPYLREDPIRALYLIAKNGTPTLKKPNLVSKNLKSFLNSCLTIDTIFRATAAELLTHSFLNQACPTEDLKSIIFSRKANTHIN.

Residues 23–125 form the PH domain; it reads GIIRSGWVML…WMDLISSRAL (103 aa). Residues 129 to 142 form the CRIB domain; the sequence is VSSPMNPKHQVHVG. Positions 309-566 constitute a Protein kinase domain; it reads FNVKHKLGQG…AAELLTHSFL (258 aa). Residues 315–323 and K343 each bind ATP; that span reads LGQGASGSV. The active-site Proton acceptor is D434.

It belongs to the protein kinase superfamily. STE Ser/Thr protein kinase family. STE20 subfamily.

It catalyses the reaction L-seryl-[protein] + ATP = O-phospho-L-seryl-[protein] + ADP + H(+). It carries out the reaction L-threonyl-[protein] + ATP = O-phospho-L-threonyl-[protein] + ADP + H(+). Functionally, forms an activated complex with GTP-bound Ras-like cdc42. Participates in Ras-dependent morphological control and mating response pathways. This Schizosaccharomyces pombe (strain 972 / ATCC 24843) (Fission yeast) protein is Serine/threonine-protein kinase shk2 (shk2).